We begin with the raw amino-acid sequence, 273 residues long: BTB and MATH domain-containing protein 15 (273 aa).

The MATH domain occupies 7 to 123 (EFVFHHTFKD…DNSFTIEACV (117 aa)). Residues 147-206 (SDVILVVGDEKFYVLKLFLASHSSYFNALFLGKFKEADQSEVTLQNIDPTDFQSLLEVLY) form the BTB domain.

Interacts with cul-3.

It participates in protein modification; protein ubiquitination. In terms of biological role, probable substrate-specific adapter of an E3 ubiquitin-protein ligase complex which mediates the ubiquitination and subsequent proteasomal degradation of target proteins. This is BTB and MATH domain-containing protein 15 (bath-15) from Caenorhabditis elegans.